We begin with the raw amino-acid sequence, 199 residues long: Small ribosomal subunit protein uS4c (199 aa).

Positions 1 to 24 (MESDQSKVESDQSKMESDQSKVES) are enriched in basic and acidic residues. The interval 1–35 (MESDQSKVESDQSKMESDQSKVESDQSISQSTSKK) is disordered. Positions 84-146 (MRLDNIIFRL…QKSQELIKRN (63 aa)) constitute an S4 RNA-binding domain.

The protein belongs to the universal ribosomal protein uS4 family. As to quaternary structure, part of the 30S ribosomal subunit. Contacts protein S5. The interaction surface between S4 and S5 is involved in control of translational fidelity.

Its subcellular location is the plastid. The protein localises to the chloroplast. Functionally, one of the primary rRNA binding proteins, it binds directly to 16S rRNA where it nucleates assembly of the body of the 30S subunit. With S5 and S12 plays an important role in translational accuracy. This chain is Small ribosomal subunit protein uS4c (rps4), found in Psilotum nudum (Whisk fern).